The sequence spans 526 residues: Fusicoccadiene 8-ol C-16-hydroxylase (526 aa).

The helical transmembrane segment at 34–56 (AFVGFSVLGLTLLFSKLFYNAYL) threads the bilayer. 3 N-linked (GlcNAc...) asparagine glycosylation sites follow: asparagine 309, asparagine 418, and asparagine 434. Cysteine 470 contributes to the heme binding site.

It belongs to the cytochrome P450 family. The cofactor is heme.

Its subcellular location is the membrane. The protein operates within mycotoxin biosynthesis. In terms of biological role, cytochrome P450 monooxygenase; part of the 2 gene clusters that mediate the biosynthesis of fusicoccins, diterpene glucosides that display phytohormone-like activity and function as potent activators of plasma membrane H(+)-ATPases in plants by modifying 14-3-3 proteins and cause the plant disease constriction canker. The first step in the pathway is performed by the fusicoccadiene synthase PaFS that possesses both prenyl transferase and terpene cyclase activity, converting isopentenyl diphosphate and dimethylallyl diphosphate into geranylgeranyl diphosphate (GGDP) and successively converting GGDP into fusicocca-2,10(14)-diene, a precursor for fusicoccin H. The second step is the oxidation at the C-8 position by the cytochrome P450 monooxygenase PaP450-2 to yield fusicocca-2,10(14)-diene-8-beta-ol. The cytochrome P450 monooxygenase PaP450-1 then catalyzes the hydroxylation at the C-16 position to produce fusicocca-2,10(14)-diene-8-beta,16-diol. The dioxygenase fc-dox then catalyzes the 16-oxydation of fusicocca-2,10(14)-diene-8-beta,16-diol to yield an aldehyde (8-beta-hydroxyfusicocca-1,10(14)-dien-16-al). The short-chain dehydrogenase/reductase fc-sdr catalyzes the reduction of the aldehyde to yield fusicocca-1,10(14)-diene-8-beta,16-diol. The next step is the hydroxylation at C-9 performed by the cytochrome P450 monooxygenase PaP450-3 that leads to fusicoccin H aglycon which is glycosylated to fusicoccin H by the O-glycosyltransferase PaGT. Hydroxylation at C-12 by the cytochrome P450 monooxygenase PaP450-4 leads then to the production of fusicoccin Q and is followed by methylation by the O-methyltransferase PaMT to yield fusicoccin P. Fusicoccin P is further converted to fusicoccin J via prenylation by the O-glucose prenyltransferase PaPT. Cytochrome P450 monooxygenase PaP450-5 then performs hydroxylation at C-19 to yield dideacetyl-fusicoccin A which is acetylated to 3'-O-deacetyl-fusicoccin A by the O-acetyltransferase PaAT-2. Finally, a another acetylation by the O-acetyltransferase PaAT-1 yields fusicoccin A. The chain is Fusicoccadiene 8-ol C-16-hydroxylase from Phomopsis amygdali (Fusicoccum amygdali).